Here is a 389-residue protein sequence, read N- to C-terminus: Nucleic acid dioxygenase ALKBH1 (389 aa).

Residues 86–389 (SKWQAYGLKG…VKRARINPDS (304 aa)) are tRNA-binding. Residues W144 and 175 to 177 (YHY) each bind substrate. The Fe2OG dioxygenase domain occupies 208–347 (GFEDFRAEAG…RVNMTVRQVL (140 aa)). 220–222 (NYY) contacts 2-oxoglutarate. Residues H231, D233, and H287 each coordinate Fe cation. D233 is a binding site for substrate. 338-344 (RVNMTVR) contacts 2-oxoglutarate.

The protein belongs to the alkB family. Monomer. Interacts with DNAJB6. It depends on Fe(2+) as a cofactor. Ubiquitous.

The protein localises to the nucleus. The protein resides in the mitochondrion. The catalysed reaction is 2'-deoxyribonucleotide-(2'-deoxyribose 5'-phosphate)-2'-deoxyribonucleotide-DNA = a 3'-end 2'-deoxyribonucleotide-(2,3-dehydro-2,3-deoxyribose 5'-phosphate)-DNA + a 5'-end 5'-phospho-2'-deoxyribonucleoside-DNA + H(+). It catalyses the reaction a methylated nucleobase within DNA + 2-oxoglutarate + O2 = a nucleobase within DNA + formaldehyde + succinate + CO2. It carries out the reaction an N(6)-methyl-2'-deoxyadenosine in DNA + 2-oxoglutarate + O2 = a 2'-deoxyadenosine in DNA + formaldehyde + succinate + CO2. The enzyme catalyses an N(1)-methyladenosine in tRNA + 2-oxoglutarate + O2 = an adenosine in tRNA + formaldehyde + succinate + CO2. The catalysed reaction is 5-methylcytidine(34) in mitochondrial tRNA(Met) + 2 2-oxoglutarate + 2 O2 = 5-formylcytidine(34) in mitochondrial tRNA(Met) + 2 succinate + 2 CO2 + H2O. It catalyses the reaction an N(3)-methylcytidine in mRNA + 2-oxoglutarate + O2 = a cytidine in mRNA + formaldehyde + succinate + CO2. It carries out the reaction N(1)-methyladenosine(58) in tRNA + 2-oxoglutarate + O2 = adenosine(58) in tRNA + formaldehyde + succinate + CO2. Its function is as follows. Dioxygenase that acts on nucleic acids, such as DNA and tRNA. Requires molecular oxygen, alpha-ketoglutarate and iron. A number of activities have been described for this dioxygenase, but recent results suggest that it mainly acts on tRNAs and mediates their demethylation or oxidation depending on the context and subcellular compartment. Mainly acts as a tRNA demethylase by removing N(1)-methyladenine from various tRNAs, with a preference for N(1)-methyladenine at position 58 (m1A58) present on a stem loop structure of tRNAs. Acts as a regulator of translation initiation and elongation in response to glucose deprivation: regulates both translation initiation, by mediating demethylation of tRNA(Met), and translation elongation, N(1)-methyladenine-containing tRNAs being preferentially recruited to polysomes to promote translation elongation. In mitochondrion, specifically interacts with mt-tRNA(Met) and mediates oxidation of mt-tRNA(Met) methylated at cytosine(34) to form 5-formylcytosine (f(5)c) at this position. mt-tRNA(Met) containing the f(5)c modification at the wobble position enables recognition of the AUA codon in addition to the AUG codon, expanding codon recognition in mitochondrial translation. Specifically demethylates DNA methylated on the 6th position of adenine (N(6)-methyladenosine) DNA. N(6)-methyladenosine (m6A) DNA is present at some L1 elements in embryonic stem cells and probably promotes their silencing. Demethylates mRNAs containing N(3)-methylcytidine modification. Also able to repair alkylated single-stranded DNA by oxidative demethylation, but with low activity. Also has DNA lyase activity and introduces double-stranded breaks at abasic sites: cleaves both single-stranded DNA and double-stranded DNA at abasic sites, with the greatest activity towards double-stranded DNA with two abasic sites. DNA lyase activity does not require alpha-ketoglutarate and iron and leads to the formation of an irreversible covalent protein-DNA adduct with the 5' DNA product. DNA lyase activity is not required during base excision repair and class switch recombination of the immunoglobulin heavy chain during B lymphocyte activation. May play a role in placental trophoblast lineage differentiation. This chain is Nucleic acid dioxygenase ALKBH1, found in Homo sapiens (Human).